The following is a 476-amino-acid chain: MKPTLPNYDQSSVLIVGDVMLDRYWGGPTSRISPEAPVPVVKVEKIEERPGGAANVAMNIAALGGDAHLVGLVGEDEPAQALTTTLESLKVHCDFVALPEFPTITKLRVMSRGQQLIRLDFEDSFHDVAAEPIISRMQQALSSVKAVVLSDYAKGALEHVQLMIQEARKVNVPVFIDPKGADFERYRGATLLTPNMLEFETVVGKVKDEDDLVAKGQQIIEEFDFEALLVTRSEHGMTLLRRNMEPLHLPTQAREVFDVTGAGDTVISVLAASVSTGKPLDEACALANAAAGVVVGKLGTSTLSTIELAEAIHGSQDSGFGIIGEEQLISAVKQARARGEKVVMTNGCFDILHAGHVSYLNHAAELGDRLIVAVNTNESVQRLKGPGRPINPTDRRMAVLAGLGAVDWVVPFSEDTPQRLISQVLPSLLVKGGDYAIEDIAGGAEVIAAGGEVKVLNFEDGCSTTGIIEAIKGGRG.

The ribokinase stretch occupies residues 1 to 319 (MKPTLPNYDQ…EAIHGSQDSG (319 aa)). 195–198 (NMLE) lines the ATP pocket. Residue aspartate 264 is part of the active site. A cytidylyltransferase region spans residues 344-476 (MTNGCFDILH…IIEAIKGGRG (133 aa)).

This sequence in the N-terminal section; belongs to the carbohydrate kinase PfkB family. The protein in the C-terminal section; belongs to the cytidylyltransferase family. Homodimer.

It catalyses the reaction D-glycero-beta-D-manno-heptose 7-phosphate + ATP = D-glycero-beta-D-manno-heptose 1,7-bisphosphate + ADP + H(+). The catalysed reaction is D-glycero-beta-D-manno-heptose 1-phosphate + ATP + H(+) = ADP-D-glycero-beta-D-manno-heptose + diphosphate. It participates in nucleotide-sugar biosynthesis; ADP-L-glycero-beta-D-manno-heptose biosynthesis; ADP-L-glycero-beta-D-manno-heptose from D-glycero-beta-D-manno-heptose 7-phosphate: step 1/4. Its pathway is nucleotide-sugar biosynthesis; ADP-L-glycero-beta-D-manno-heptose biosynthesis; ADP-L-glycero-beta-D-manno-heptose from D-glycero-beta-D-manno-heptose 7-phosphate: step 3/4. Its function is as follows. Catalyzes the phosphorylation of D-glycero-D-manno-heptose 7-phosphate at the C-1 position to selectively form D-glycero-beta-D-manno-heptose-1,7-bisphosphate. Catalyzes the ADP transfer from ATP to D-glycero-beta-D-manno-heptose 1-phosphate, yielding ADP-D-glycero-beta-D-manno-heptose. This chain is Bifunctional protein HldE, found in Aliivibrio fischeri (strain ATCC 700601 / ES114) (Vibrio fischeri).